A 131-amino-acid chain; its full sequence is Small ribosomal subunit protein uS8 (131 aa).

The protein belongs to the universal ribosomal protein uS8 family. Part of the 30S ribosomal subunit. Contacts proteins S5 and S12.

One of the primary rRNA binding proteins, it binds directly to 16S rRNA central domain where it helps coordinate assembly of the platform of the 30S subunit. In Wolbachia pipientis wMel, this protein is Small ribosomal subunit protein uS8.